Consider the following 391-residue polypeptide: Probable sugar efflux transporter (391 aa).

The next 12 helical transmembrane spans lie at 16–36 (VFVF…PVAL), 51–71 (VGLM…PLML), 82–102 (LLFL…AWNF), 103–123 (WVLL…WSIT), 138–158 (QALG…LPLG), 171–191 (FGVI…LLPP), 210–230 (PLLM…FTTY), 247–267 (ITTL…FLFG), 277–297 (FIAF…VFKN), 300–320 (WVIF…TIAL), 338–358 (IFSG…SIVI), and 361–381 (LGLG…LFWL).

The protein belongs to the major facilitator superfamily. SotB (TC 2.A.1.2) family.

It is found in the cell inner membrane. Involved in the efflux of sugars. The physiological role may be the reduction of the intracellular concentration of toxic sugars or sugar metabolites. This chain is Probable sugar efflux transporter, found in Helicobacter pylori (strain G27).